A 663-amino-acid chain; its full sequence is 4-hydroxy-3-methylbut-2-en-1-yl diphosphate synthase (flavodoxin) (663 aa).

[4Fe-4S] cluster is bound by residues Cys-568, Cys-571, Cys-602, and Glu-609.

Belongs to the IspG family. It depends on [4Fe-4S] cluster as a cofactor.

It carries out the reaction (2E)-4-hydroxy-3-methylbut-2-enyl diphosphate + oxidized [flavodoxin] + H2O + 2 H(+) = 2-C-methyl-D-erythritol 2,4-cyclic diphosphate + reduced [flavodoxin]. Its pathway is isoprenoid biosynthesis; isopentenyl diphosphate biosynthesis via DXP pathway; isopentenyl diphosphate from 1-deoxy-D-xylulose 5-phosphate: step 5/6. In terms of biological role, converts 2C-methyl-D-erythritol 2,4-cyclodiphosphate (ME-2,4cPP) into 1-hydroxy-2-methyl-2-(E)-butenyl 4-diphosphate. The sequence is that of 4-hydroxy-3-methylbut-2-en-1-yl diphosphate synthase (flavodoxin) from Leptospira borgpetersenii serovar Hardjo-bovis (strain L550).